The sequence spans 304 residues: Putative HTH-type transcriptional regulatory protein Memar_2347 (304 aa).

The HTH cro/C1-type domain occupies 132-189 (LREVRERFRMSLGDLASHLGVSRRTISKYESGMGTTLDVAIKLEEIFNAPLVETIELL). The H-T-H motif DNA-binding region spans 143-162 (LGDLASHLGVSRRTISKYES).

This Methanoculleus marisnigri (strain ATCC 35101 / DSM 1498 / JR1) protein is Putative HTH-type transcriptional regulatory protein Memar_2347.